The following is a 284-amino-acid chain: Tryptophan 2,3-dioxygenase (284 aa).

Substrate contacts are provided by residues 53–57 (FIVQH), Tyr-115, and Arg-119. His-242 is a binding site for heme. Thr-256 is a binding site for substrate.

It belongs to the tryptophan 2,3-dioxygenase family. As to quaternary structure, homotetramer. It depends on heme as a cofactor.

The enzyme catalyses L-tryptophan + O2 = N-formyl-L-kynurenine. It functions in the pathway amino-acid degradation; L-tryptophan degradation via kynurenine pathway; L-kynurenine from L-tryptophan: step 1/2. Its function is as follows. Heme-dependent dioxygenase that catalyzes the oxidative cleavage of the L-tryptophan (L-Trp) pyrrole ring and converts L-tryptophan to N-formyl-L-kynurenine. Catalyzes the oxidative cleavage of the indole moiety. The chain is Tryptophan 2,3-dioxygenase from Bordetella parapertussis (strain 12822 / ATCC BAA-587 / NCTC 13253).